Reading from the N-terminus, the 619-residue chain is Pentatricopeptide repeat-containing protein At1g68980, mitochondrial (619 aa).

The transit peptide at 1 to 100 (MLRKTLTLIS…RAFVSTTYVI (100 aa)) directs the protein to the mitochondrion. PPR repeat units follow at residues 186 to 221 (DLVASNAALEACCRQMESLADAENLIESMDVLGVKP), 222 to 256 (DELSFGFLAYLYARKGLREKISELEDLMDGLGFAS), 257 to 292 (RRILYSSMISGYVKSGDLDSASDVILCSLKGVGEAS), 295 to 329 (SEETYCELVRGFIESKSVESLAKLIIEAQKLESMS), 366 to 400 (GIGVYVPILKAYCKEGRTSEATQLVTEISSSGLQL), 401 to 435 (DVETYNTMIEASMTKHDFLSALTLFRDMRETRVAD), 436 to 466 (LKRCYLTIMTGLLENQRPELMAEFVEEVMED), 472 to 506 (KSHDWNSIIHAFCKSGRLGDAKSTFRRMTFLQYEP), 507 to 541 (NNQTYLSLINGYVSCEKYFEVVVIWKEFKDKKAKL), and 542 to 576 (EHALADAFLNALVKGGFFGTALQVIEKCQEMKIFV).

The protein belongs to the PPR family. P subfamily.

The protein resides in the mitochondrion. This Arabidopsis thaliana (Mouse-ear cress) protein is Pentatricopeptide repeat-containing protein At1g68980, mitochondrial.